A 171-amino-acid polypeptide reads, in one-letter code: Adenine phosphoribosyltransferase (171 aa).

This sequence belongs to the purine/pyrimidine phosphoribosyltransferase family. In terms of assembly, homodimer.

It is found in the cytoplasm. It catalyses the reaction AMP + diphosphate = 5-phospho-alpha-D-ribose 1-diphosphate + adenine. It participates in purine metabolism; AMP biosynthesis via salvage pathway; AMP from adenine: step 1/1. Functionally, catalyzes a salvage reaction resulting in the formation of AMP, that is energically less costly than de novo synthesis. The polypeptide is Adenine phosphoribosyltransferase (Mesomycoplasma hyopneumoniae (strain 232) (Mycoplasma hyopneumoniae)).